We begin with the raw amino-acid sequence, 460 residues long: Endoglucanase 2 (460 aa).

The signal sequence occupies residues methionine 1–alanine 32. The active-site Proton donor is glutamate 99. The Nucleophile role is filled by aspartate 155. In terms of domain architecture, Dockerin spans glutamine 400 to asparagine 460.

The protein belongs to the glycosyl hydrolase 8 (cellulase D) family.

The enzyme catalyses Endohydrolysis of (1-&gt;4)-beta-D-glucosidic linkages in cellulose, lichenin and cereal beta-D-glucans.. The chain is Endoglucanase 2 (celB) from Ruminiclostridium josui (Clostridium josui).